A 177-amino-acid chain; its full sequence is MEKNMSYWHQVPPGPNPPDEVYVVVEIPKGERNKYEIAKEFPGIKLDRIIYSSYVYPLEYGLIPQTYYSDGDPIDAMVFMSQSTYPGVILRAKPVGMMNMVDSGDVDNKIICVCLDDPVYSKINNYREIPEHVLKETENFFETYKKLQNKEVKVTGWEGPDKAKQEIKKAIEDYKKL.

The substrate site is built by lysine 34, arginine 48, and tyrosine 60. The Mg(2+) site is built by aspartate 70, aspartate 75, and aspartate 107. Tyrosine 144 lines the substrate pocket.

The protein belongs to the PPase family. As to quaternary structure, homohexamer. Mg(2+) serves as cofactor.

The protein localises to the cytoplasm. The catalysed reaction is diphosphate + H2O = 2 phosphate + H(+). Catalyzes the hydrolysis of inorganic pyrophosphate (PPi) forming two phosphate ions. The chain is Inorganic pyrophosphatase from Picrophilus torridus (strain ATCC 700027 / DSM 9790 / JCM 10055 / NBRC 100828 / KAW 2/3).